The chain runs to 421 residues: Serine--tRNA ligase (421 aa).

229–231 (TAE) is a binding site for L-serine. Residue 260–262 (RAE) coordinates ATP. An L-serine-binding site is contributed by E283. Residue 347–350 (EISS) coordinates ATP. An L-serine-binding site is contributed by S383.

The protein belongs to the class-II aminoacyl-tRNA synthetase family. Type-1 seryl-tRNA synthetase subfamily. As to quaternary structure, homodimer. The tRNA molecule binds across the dimer.

It localises to the cytoplasm. It catalyses the reaction tRNA(Ser) + L-serine + ATP = L-seryl-tRNA(Ser) + AMP + diphosphate + H(+). The enzyme catalyses tRNA(Sec) + L-serine + ATP = L-seryl-tRNA(Sec) + AMP + diphosphate + H(+). The protein operates within aminoacyl-tRNA biosynthesis; selenocysteinyl-tRNA(Sec) biosynthesis; L-seryl-tRNA(Sec) from L-serine and tRNA(Sec): step 1/1. Functionally, catalyzes the attachment of serine to tRNA(Ser). Is also able to aminoacylate tRNA(Sec) with serine, to form the misacylated tRNA L-seryl-tRNA(Sec), which will be further converted into selenocysteinyl-tRNA(Sec). The protein is Serine--tRNA ligase of Desulfitobacterium hafniense (strain Y51).